A 347-amino-acid polypeptide reads, in one-letter code: uncharacterized protein (347 aa).

A run of 10 helical transmembrane segments spans residues 6–26, 37–57, 90–110, 114–134, 140–160, 182–202, 217–237, 262–282, 289–309, and 317–337; these read GSASQLAFVYVGTVVGAGFAT, FGWFGFFGILVSGGMFTLLGA, FMLFVLLGVTSVMLSGAGALF, LGMSAQIGMLITIGLSLIVMT, IFGVNVFVVPLLIIFSMIVVA, WLLSAVSYGALNLSLAQAVLV, GALIGGTMLTIVLSASFLSLS, LIYLLIIFGEVFTSVIGNLYG, SFLPVKSKYIFAAIMITAYIT, and LISTIYPLFGYVSLAFIGALL.

It is found in the cell membrane. This is an uncharacterized protein from Bacillus subtilis (strain 168).